Reading from the N-terminus, the 172-residue chain is Translation initiation factor IF-3 (172 aa).

It belongs to the IF-3 family. Monomer.

It is found in the cytoplasm. Its function is as follows. IF-3 binds to the 30S ribosomal subunit and shifts the equilibrium between 70S ribosomes and their 50S and 30S subunits in favor of the free subunits, thus enhancing the availability of 30S subunits on which protein synthesis initiation begins. The chain is Translation initiation factor IF-3 from Bartonella tribocorum (strain CIP 105476 / IBS 506).